Consider the following 494-residue polypeptide: Bifunctional protein HldE (494 aa).

Residues 1 to 334 are ribokinase; sequence MPTPILDFDA…RKILPHAYLA (334 aa). 209–212 contributes to the ATP binding site; it reads NRKE. D279 is an active-site residue. The segment at 362-494 is cytidylyltransferase; sequence FTNGCFDILH…LVHRARGGAK (133 aa).

It in the N-terminal section; belongs to the carbohydrate kinase PfkB family. The protein in the C-terminal section; belongs to the cytidylyltransferase family. Homodimer.

The enzyme catalyses D-glycero-beta-D-manno-heptose 7-phosphate + ATP = D-glycero-beta-D-manno-heptose 1,7-bisphosphate + ADP + H(+). The catalysed reaction is D-glycero-beta-D-manno-heptose 1-phosphate + ATP + H(+) = ADP-D-glycero-beta-D-manno-heptose + diphosphate. Its pathway is nucleotide-sugar biosynthesis; ADP-L-glycero-beta-D-manno-heptose biosynthesis; ADP-L-glycero-beta-D-manno-heptose from D-glycero-beta-D-manno-heptose 7-phosphate: step 1/4. The protein operates within nucleotide-sugar biosynthesis; ADP-L-glycero-beta-D-manno-heptose biosynthesis; ADP-L-glycero-beta-D-manno-heptose from D-glycero-beta-D-manno-heptose 7-phosphate: step 3/4. Functionally, catalyzes the phosphorylation of D-glycero-D-manno-heptose 7-phosphate at the C-1 position to selectively form D-glycero-beta-D-manno-heptose-1,7-bisphosphate. Catalyzes the ADP transfer from ATP to D-glycero-beta-D-manno-heptose 1-phosphate, yielding ADP-D-glycero-beta-D-manno-heptose. In Bradyrhizobium diazoefficiens (strain JCM 10833 / BCRC 13528 / IAM 13628 / NBRC 14792 / USDA 110), this protein is Bifunctional protein HldE.